The sequence spans 167 residues: MKILVIQGPNLNMLGHRDPRLYGMVTLDQIHEIMQTFVKQGNLDVELEFFQTNFEGEIIDKIQESVGSDYEGIIINPGAFSHTSIAIADAIMLAGKPVIEVHLTNIQAREEFRKNSYTGAACGGVIMGFGPLGYNMALMAMVNILAEMKAFQEAQKNNPNNPINNQK.

Y22 functions as the Proton acceptor in the catalytic mechanism. Substrate contacts are provided by N76, H82, and D89. Catalysis depends on H102, which acts as the Proton donor. Substrate is bound by residues 103-104 (LT) and R113.

The protein belongs to the type-II 3-dehydroquinase family. In terms of assembly, homododecamer.

It carries out the reaction 3-dehydroquinate = 3-dehydroshikimate + H2O. The protein operates within metabolic intermediate biosynthesis; chorismate biosynthesis; chorismate from D-erythrose 4-phosphate and phosphoenolpyruvate: step 3/7. Its function is as follows. Catalyzes a trans-dehydration via an enolate intermediate. In Helicobacter pylori (strain P12), this protein is 3-dehydroquinate dehydratase.